A 160-amino-acid polypeptide reads, in one-letter code: Baculoviral IAP repeat-containing protein 5.1-A (160 aa).

A BIR repeat occupies Arg-27–Ser-97. Thr-43 carries the phosphothreonine; by CDK1 modification. Cys-66, Cys-69, His-86, and Cys-93 together coordinate Zn(2+).

Belongs to the IAP family. As to quaternary structure, component of the CPC at least composed of survivin/birc5, incenp, cdca8/borealin and/or cdca9/dasra-A, and aurkb/aurora-B. Interacts directly with incenp (via N-terminus), and may weakly interact with aurkb (via N-terminus) to stabilize the complex. Interacts with GTP-bound ran in both the S and M phases of the cell cycle. Also found in a complex with ubiquitin-mediated signaling proteins including at least usp9x/xFAM, nploc4/npl4 and ufd1. Post-translationally, ubiquitination is required for centrosome-targeting.

It is found in the cytoplasm. It localises to the nucleus. Its subcellular location is the chromosome. The protein resides in the centromere. The protein localises to the cytoskeleton. It is found in the spindle. In terms of biological role, component of the chromosomal passenger complex (CPC), a complex that acts as a key regulator of mitosis. The CPC complex has essential functions at the centromere in ensuring correct chromosome alignment and segregation and is required for chromatin-induced microtubule stabilization and spindle assembly. Stimulates the mitotic kinase activity of aurkb/aurora-B in the CPC. Does not appear to exhibit anti-apoptotic activity. The chain is Baculoviral IAP repeat-containing protein 5.1-A (birc5.1-a) from Xenopus laevis (African clawed frog).